Here is a 343-residue protein sequence, read N- to C-terminus: Protein RecA (343 aa).

Position 68-75 (68-75 (GPESSGKT)) interacts with ATP.

It belongs to the RecA family.

Its subcellular location is the cytoplasm. Functionally, can catalyze the hydrolysis of ATP in the presence of single-stranded DNA, the ATP-dependent uptake of single-stranded DNA by duplex DNA, and the ATP-dependent hybridization of homologous single-stranded DNAs. It interacts with LexA causing its activation and leading to its autocatalytic cleavage. This Syntrophobacter fumaroxidans (strain DSM 10017 / MPOB) protein is Protein RecA.